We begin with the raw amino-acid sequence, 371 residues long: Histidinol-phosphate aminotransferase 2 (371 aa).

K232 is subject to N6-(pyridoxal phosphate)lysine.

The protein belongs to the class-II pyridoxal-phosphate-dependent aminotransferase family. Histidinol-phosphate aminotransferase subfamily. As to quaternary structure, homodimer. Pyridoxal 5'-phosphate is required as a cofactor.

It carries out the reaction L-histidinol phosphate + 2-oxoglutarate = 3-(imidazol-4-yl)-2-oxopropyl phosphate + L-glutamate. The protein operates within amino-acid biosynthesis; L-histidine biosynthesis; L-histidine from 5-phospho-alpha-D-ribose 1-diphosphate: step 7/9. This chain is Histidinol-phosphate aminotransferase 2, found in Methylococcus capsulatus (strain ATCC 33009 / NCIMB 11132 / Bath).